We begin with the raw amino-acid sequence, 307 residues long: Ribonuclease Z (307 aa).

The Zn(2+) site is built by histidine 61, histidine 63, aspartate 65, histidine 66, histidine 138, aspartate 208, and histidine 264. Residue aspartate 65 is the Proton acceptor of the active site.

It belongs to the RNase Z family. As to quaternary structure, homodimer. Zn(2+) serves as cofactor.

It catalyses the reaction Endonucleolytic cleavage of RNA, removing extra 3' nucleotides from tRNA precursor, generating 3' termini of tRNAs. A 3'-hydroxy group is left at the tRNA terminus and a 5'-phosphoryl group is left at the trailer molecule.. Its function is as follows. Zinc phosphodiesterase, which displays some tRNA 3'-processing endonuclease activity. Probably involved in tRNA maturation, by removing a 3'-trailer from precursor tRNA. The sequence is that of Ribonuclease Z from Pyrococcus horikoshii (strain ATCC 700860 / DSM 12428 / JCM 9974 / NBRC 100139 / OT-3).